A 214-amino-acid chain; its full sequence is MVIDKSIPKATAKRLSLYYRIFKRFYADQVEKASSKQIADAMGIDSATVRRDFSYFGELGRRGFGYDVTKLMNFFADLLNDHSTTHVILVGCGNIGRALLHYRFHDRNKMQIVMGFDTDDNPMVGTKTPDDIPIYGISTIKEHLDNSGIETAILTVPSIYAQEVADQLIEAGIRGILSFAPLHLQVPKGVIVQSVDLTSELQTLLYFMNQNHLD.

Positions 17–56 (LYYRIFKRFYADQVEKASSKQIADAMGIDSATVRRDFSYF) form a DNA-binding region, H-T-H motif. 91 to 96 (GCGNIG) is a binding site for NAD(+).

The protein belongs to the transcriptional regulatory Rex family. Homodimer.

The protein localises to the cytoplasm. Modulates transcription in response to changes in cellular NADH/NAD(+) redox state. The polypeptide is Redox-sensing transcriptional repressor Rex (Streptococcus equi subsp. zooepidemicus (strain H70)).